A 140-amino-acid polypeptide reads, in one-letter code: ISDra2 transposase TnpA (140 aa).

Mg(2+)-binding residues include H67 and H69. The interval 127–133 (AQIQKYI) is mobile alpha helix. Y132 acts as the Nucleophile in catalysis. Q136 lines the Mg(2+) pocket.

Belongs to the transposase 17 family. Homodimer. The cofactor is Mg(2+).

Its activity is regulated as follows. Both the excision and insertion steps are inhibited by TnpB. Functionally, a transposase that is part of insertion sequence (IS) element ISDra2, it is necessary and sufficient for both transposon excision and insertion of ISDra2. This protein alone can be provided in trans and allows transposition of an empty IS element (tnpA or tnpA-tnpB replaced by a selectable marker). ISDra2 binds subterminal imperfect palindromes at the left (LE) and right (RE) ends of the element and cleaves only the 'top strand' which is circularized and subsequently reinserted into the DNA target. This is called a 'peel and paste' mechanism and increases the copy number of the IS. Transposition is linked to DNA replication in the absence of irradiation, with maximal activity when the 'top strand' is on the replication lagging strand, and occurs preferentially on the lagging strand. The IS element inserts 3' of the target sequence 5'-TTGAT-3'; target duplication has not been observed. The sequence is that of ISDra2 transposase TnpA from Deinococcus radiodurans (strain ATCC 13939 / DSM 20539 / JCM 16871 / CCUG 27074 / LMG 4051 / NBRC 15346 / NCIMB 9279 / VKM B-1422 / R1).